Here is a 432-residue protein sequence, read N- to C-terminus: Homogentisate 1,2-dioxygenase (432 aa).

The active-site Proton acceptor is His287. Fe cation-binding residues include His330 and Glu336. Homogentisate is bound by residues Tyr345 and His366. Fe cation is bound at residue His366.

Belongs to the homogentisate dioxygenase family. Hexamer; dimer of trimers. Fe cation is required as a cofactor.

It carries out the reaction homogentisate + O2 = 4-maleylacetoacetate + H(+). It participates in amino-acid degradation; L-phenylalanine degradation; acetoacetate and fumarate from L-phenylalanine: step 4/6. In terms of biological role, involved in the catabolism of homogentisate (2,5-dihydroxyphenylacetate or 2,5-OH-PhAc), a central intermediate in the degradation of phenylalanine and tyrosine. Catalyzes the oxidative ring cleavage of the aromatic ring of homogentisate to yield maleylacetoacetate. In Pseudomonas aeruginosa (strain UCBPP-PA14), this protein is Homogentisate 1,2-dioxygenase.